The chain runs to 543 residues: Chaperonin GroEL (543 aa).

Residues 29–32 (TLGP), 86–90 (DGTTT), glycine 413, 476–478 (NAA), and aspartate 492 each bind ATP.

The protein belongs to the chaperonin (HSP60) family. In terms of assembly, forms a cylinder of 14 subunits composed of two heptameric rings stacked back-to-back. Interacts with the co-chaperonin GroES.

The protein localises to the cytoplasm. The catalysed reaction is ATP + H2O + a folded polypeptide = ADP + phosphate + an unfolded polypeptide.. In terms of biological role, together with its co-chaperonin GroES, plays an essential role in assisting protein folding. The GroEL-GroES system forms a nano-cage that allows encapsulation of the non-native substrate proteins and provides a physical environment optimized to promote and accelerate protein folding. This chain is Chaperonin GroEL, found in Streptococcus pyogenes serotype M18 (strain MGAS8232).